The chain runs to 30 residues: Conotoxin CcTx (30 aa).

Pro-2 bears the 4-hydroxyproline mark. O-linked (HexNAc...) serine glycosylation occurs at Ser-7. 3 disulfides stabilise this stretch: Cys-12–Cys-21, Cys-13–Cys-26, and Cys-24–Cys-30. Residues Pro-17 and Pro-22 each carry the 4-hydroxyproline modification.

Post-translationally, O-glycosylated at Ser-7 by a core type 9 glycan, containing both D- and L-galactose units (alpha-L-Galp-(1-&gt;4)-alpha-D- GlcpNAc-(1-&gt;6)-[alpha-L-Galp-(1-&gt;2)-bets-D-Galp-(1-&gt;3)-]alpha-D-GalpNAc-(1-&gt;O)). Expressed by the venom duct.

It localises to the secreted. Functionally, may specifically activate neuronal voltage-gated sodium channels (Nav) at the resting membrane potential. Causes a marked contraction and extension of the caudal and dorsal fins in fish and noticeable spontaneous contractions of isolated frog neuromuscular preparations. This is Conotoxin CcTx from Conus consors (Singed cone).